Here is an 89-residue protein sequence, read N- to C-terminus: Large ribosomal subunit protein bL27 (89 aa).

The segment at 1–21 is disordered; that stretch reads MAHKKAGGSSRNGRDSAGRRL.

It belongs to the bacterial ribosomal protein bL27 family.

The chain is Large ribosomal subunit protein bL27 from Erythrobacter litoralis (strain HTCC2594).